The sequence spans 325 residues: MLVISANEQRNLVNMNEVIAYAALALKEFSAERTITPIRGSLPFANEKNTALIMPSVAEGLEALGLKVVTVVPENKKIGKKTINGIVMLSDFQTGEPLALLEGSYLTMIRTGALSGVATKHLARHNAKTLCIIGTGEQAKGIAEAVFAVRDIEKVILYNRTEEKAYAFSQYIQEKFGKPAYVHTNANEAISEADIIVTTTNASTPVFSEKLQKGVHVNAVGSFKPSMQELPSHAIVGANKVVVESKEAALDETGDLQVPIKEGLFKANAIHAELGQIISGEKAGRENDEEITVFKSVGLAVVDIIVAKYLYEKAVESGVGNKIEF.

This sequence belongs to the ornithine cyclodeaminase/mu-crystallin family.

The enzyme catalyses L-proline + NAD(+) = 1-pyrroline-2-carboxylate + NADH + H(+). It carries out the reaction L-proline + NADP(+) = 1-pyrroline-2-carboxylate + NADPH + H(+). Functionally, catalyzes the reduction of Delta(1)-pyrroline-2-carboxylate (Pyr2C) to L-proline, using preferentially NADPH over NADH as the electron donor. Is likely involved in a degradation pathway that converts trans-3-hydroxy-L-proline (t3LHyp) to L-proline. This Bacillus thuringiensis subsp. konkukian (strain 97-27) protein is Delta(1)-pyrroline-2-carboxylate reductase.